Here is a 253-residue protein sequence, read N- to C-terminus: Phosphate import ATP-binding protein PstB 1 (253 aa).

Residues 7–248 (LQIRDLSVYY…PKRKETEDYI (242 aa)) enclose the ABC transporter domain. 39-46 (GPSGSGKS) contacts ATP.

It belongs to the ABC transporter superfamily. Phosphate importer (TC 3.A.1.7) family. As to quaternary structure, the complex is composed of two ATP-binding proteins (PstB), two transmembrane proteins (PstC and PstA) and a solute-binding protein (PstS).

Its subcellular location is the cell membrane. It carries out the reaction phosphate(out) + ATP + H2O = ADP + 2 phosphate(in) + H(+). Its function is as follows. Part of the ABC transporter complex PstSACB involved in phosphate import. Responsible for energy coupling to the transport system. The sequence is that of Phosphate import ATP-binding protein PstB 1 from Streptococcus pyogenes serotype M2 (strain MGAS10270).